Here is a 257-residue protein sequence, read N- to C-terminus: Probable pectate lyase G (257 aa).

Residues M1 to A24 form the signal peptide.

Belongs to the polysaccharide lyase 3 family. Ca(2+) is required as a cofactor.

It localises to the secreted. It catalyses the reaction Eliminative cleavage of (1-&gt;4)-alpha-D-galacturonan to give oligosaccharides with 4-deoxy-alpha-D-galact-4-enuronosyl groups at their non-reducing ends.. In terms of biological role, pectinolytic enzyme consist of four classes of enzymes: pectin lyase, polygalacturonase, pectin methylesterase and rhamnogalacturonase. Among pectinolytic enzymes, pectin lyase is the most important in depolymerization of pectin, since it cleaves internal glycosidic bonds of highly methylated pectins. Favors pectate, the anion, over pectin, the methyl ester. This chain is Probable pectate lyase G (plyG), found in Emericella nidulans (strain FGSC A4 / ATCC 38163 / CBS 112.46 / NRRL 194 / M139) (Aspergillus nidulans).